The primary structure comprises 766 residues: Isocitrate lyase 2 (766 aa).

106–108 contacts substrate; the sequence is GGW. Residue Asp-177 participates in Mg(2+) binding. Cys-215 serves as the catalytic Proton acceptor. Substrate-binding positions include 216-217, Arg-252, 487-491, and Thr-522; these read GH and NLSPS.

It belongs to the isocitrate lyase/PEP mutase superfamily. Isocitrate lyase family. It depends on Mg(2+) as a cofactor.

It catalyses the reaction D-threo-isocitrate = glyoxylate + succinate. Its pathway is carbohydrate metabolism; glyoxylate cycle; (S)-malate from isocitrate: step 1/2. In terms of biological role, involved in the persistence and virulence of Mycobacterium. Catalyzes the reversible formation of succinate and glyoxylate from isocitrate, a key step of the glyoxylate cycle, which operates as an anaplerotic route for replenishing the tricarboxylic acid cycle during growth on fatty acid substrates. The protein is Isocitrate lyase 2 (aceA) of Mycobacterium bovis (strain ATCC BAA-935 / AF2122/97).